Reading from the N-terminus, the 297-residue chain is 4-hydroxy-tetrahydrodipicolinate synthase (297 aa).

Thr-55 is a pyruvate binding site. Tyr-144 (proton donor/acceptor) is an active-site residue. Lys-172 acts as the Schiff-base intermediate with substrate in catalysis. Ile-213 contacts pyruvate.

This sequence belongs to the DapA family. Homotetramer; dimer of dimers.

Its subcellular location is the cytoplasm. It catalyses the reaction L-aspartate 4-semialdehyde + pyruvate = (2S,4S)-4-hydroxy-2,3,4,5-tetrahydrodipicolinate + H2O + H(+). Its pathway is amino-acid biosynthesis; L-lysine biosynthesis via DAP pathway; (S)-tetrahydrodipicolinate from L-aspartate: step 3/4. Its function is as follows. Catalyzes the condensation of (S)-aspartate-beta-semialdehyde [(S)-ASA] and pyruvate to 4-hydroxy-tetrahydrodipicolinate (HTPA). The chain is 4-hydroxy-tetrahydrodipicolinate synthase from Lactococcus lactis subsp. lactis (strain IL1403) (Streptococcus lactis).